The following is a 69-amino-acid chain: Large ribosomal subunit protein uL29 (69 aa).

Belongs to the universal ribosomal protein uL29 family.

In Methylobacillus flagellatus (strain ATCC 51484 / DSM 6875 / VKM B-1610 / KT), this protein is Large ribosomal subunit protein uL29.